Reading from the N-terminus, the 236-residue chain is Leucyl/phenylalanyl-tRNA--protein transferase (236 aa).

A compositionally biased stretch (polar residues) spans 1–13 (MNSLSYLNQDQQS). The disordered stretch occupies residues 1 to 22 (MNSLSYLNQDQQSFPPPEQALS).

This sequence belongs to the L/F-transferase family.

Its subcellular location is the cytoplasm. The enzyme catalyses N-terminal L-lysyl-[protein] + L-leucyl-tRNA(Leu) = N-terminal L-leucyl-L-lysyl-[protein] + tRNA(Leu) + H(+). It catalyses the reaction N-terminal L-arginyl-[protein] + L-leucyl-tRNA(Leu) = N-terminal L-leucyl-L-arginyl-[protein] + tRNA(Leu) + H(+). It carries out the reaction L-phenylalanyl-tRNA(Phe) + an N-terminal L-alpha-aminoacyl-[protein] = an N-terminal L-phenylalanyl-L-alpha-aminoacyl-[protein] + tRNA(Phe). Functions in the N-end rule pathway of protein degradation where it conjugates Leu, Phe and, less efficiently, Met from aminoacyl-tRNAs to the N-termini of proteins containing an N-terminal arginine or lysine. The sequence is that of Leucyl/phenylalanyl-tRNA--protein transferase from Shewanella piezotolerans (strain WP3 / JCM 13877).